Consider the following 141-residue polypeptide: Large ribosomal subunit protein bL17 (141 aa).

This sequence belongs to the bacterial ribosomal protein bL17 family. Part of the 50S ribosomal subunit. Contacts protein L32.

The polypeptide is Large ribosomal subunit protein bL17 (Rhizobium meliloti (strain 1021) (Ensifer meliloti)).